The chain runs to 295 residues: MVRRLTSPRLEFEAAAIYEYPEHLRSFLNDLPTRPGVYLFHGESDTMPLYIGKSVNIRSRVLSHLRTPDEAAMLRQSRRISWICTAGEIGALLLEARLIKEQQPLFNKRLRRNRQLCALQLNEKRVDVVYAKEVDFSRAPNLFGLFANRRAALQALQTIADEQKLCYGLLGLEPLSRGRACFRSALKRCAGACCGKESHEEHALRLRQSLERLRVVCWPWQGAVALKEQHPEMTQYHIIQNWLWLGAVNSLEEATTLIRTPAGFDHDGYKILCKPLLSGNYEITELDPANDQRAS.

One can recognise a GIY-YIG domain in the interval 33–108 (TRPGVYLFHG…IKEQQPLFNK (76 aa)).

Functionally, incises the DNA at the 3' side of a lesion during nucleotide excision repair. Incises the DNA farther away from the lesion than UvrC. Not able to incise the 5' site of a lesion. In vitro, the incision activity of Cho is UvrA and UvrB dependent. When a lesion remains because UvrC is not able to induce the 3' incision, Cho incises the DNA. Then UvrC makes the 5' incision. The combined action of Cho and UvrC broadens the substrate range of nucleotide excision repair. This chain is Excinuclease cho (cho), found in Escherichia coli (strain K12).